The sequence spans 185 residues: UPF0397 protein lhv_0999 (185 aa).

The next 5 membrane-spanning stretches (helical) occupy residues 11–31 (VVAMGIGSAIYVILTRFTSIP), 45–65 (FLALFAAIYGAKVGFAVGFIG), 72–92 (IMYGQTWWSWVLATGVLGLII), 111–131 (ILLFNIVQIFANIIAWIVVAP), and 145–165 (VFVQGISATLSNGITILVVGT).

This sequence belongs to the UPF0397 family.

The protein resides in the cell membrane. The chain is UPF0397 protein lhv_0999 from Lactobacillus helveticus (strain DPC 4571).